The chain runs to 302 residues: Diacetylchitobiose uptake system permease protein NgcG (302 aa).

The next 6 membrane-spanning stretches (helical) occupy residues 40-60 (LLILWSVIVIVPMLWVLMSSF), 99-119 (VIVVVSALILVMLLGAMCAYV), 131-151 (IYYVMLAGLTFPVFLAIVPLF), 166-186 (LILTYVAFALPFTMFFLYSFF), 221-241 (AAVAIFNFLGLWNQFLLPVAL), and 268-288 (GALFAAIVVTVVPVLLVYCVF). The ABC transmembrane type-1 domain maps to 95–288 (FLNSVIVVVS…VPVLLVYCVF (194 aa)).

It belongs to the binding-protein-dependent transport system permease family. The complex is composed of two ATP-binding proteins (MsiK), two transmembrane proteins (NgcF and NgcG) and a solute-binding protein (NgcE).

The protein localises to the cell membrane. Functionally, part of the ABC transporter complex NgcEFG-MsiK involved in N,N'-diacetylchitobiose ((GlcNAc)2) uptake. Responsible for the translocation of the substrate across the membrane. This Streptomyces coelicolor (strain ATCC BAA-471 / A3(2) / M145) protein is Diacetylchitobiose uptake system permease protein NgcG.